A 458-amino-acid chain; its full sequence is ATP synthase subunit beta (458 aa).

148-155 provides a ligand contact to ATP; it reads GGAGVGKT.

Belongs to the ATPase alpha/beta chains family. As to quaternary structure, F-type ATPases have 2 components, CF(1) - the catalytic core - and CF(0) - the membrane proton channel. CF(1) has five subunits: alpha(3), beta(3), gamma(1), delta(1), epsilon(1). CF(0) has three main subunits: a(1), b(2) and c(9-12). The alpha and beta chains form an alternating ring which encloses part of the gamma chain. CF(1) is attached to CF(0) by a central stalk formed by the gamma and epsilon chains, while a peripheral stalk is formed by the delta and b chains.

The protein localises to the cell inner membrane. The catalysed reaction is ATP + H2O + 4 H(+)(in) = ADP + phosphate + 5 H(+)(out). Functionally, produces ATP from ADP in the presence of a proton gradient across the membrane. The catalytic sites are hosted primarily by the beta subunits. The protein is ATP synthase subunit beta of Pseudomonas fluorescens (strain Pf0-1).